The sequence spans 98 residues: Alpha-elicitin capsicein (98 aa).

3 disulfide bridges follow: cysteine 3-cysteine 71, cysteine 27-cysteine 56, and cysteine 51-cysteine 95.

It belongs to the elicitin family.

It is found in the secreted. Functionally, induces local and distal defense responses (incompatible hypersensitive reaction) in plants from the solanaceae and cruciferae families. Elicits leaf necrosis and causes the accumulation of pathogenesis-related proteins. Might interact with the lipidic molecules of the plasma membrane. This chain is Alpha-elicitin capsicein, found in Phytophthora capsici.